The chain runs to 396 residues: Homoserine O-acetyltransferase (396 aa).

The AB hydrolase-1 domain occupies 53–370 (NAILVCHALT…DRGHDAFLLE (318 aa)). The active-site Nucleophile is Ser158. Arg228 lines the substrate pocket. Catalysis depends on residues Asp331 and His364. Asp365 contributes to the substrate binding site.

It belongs to the AB hydrolase superfamily. MetX family. In terms of assembly, homodimer.

The protein localises to the cytoplasm. It carries out the reaction L-homoserine + acetyl-CoA = O-acetyl-L-homoserine + CoA. Its pathway is amino-acid biosynthesis; L-methionine biosynthesis via de novo pathway; O-acetyl-L-homoserine from L-homoserine: step 1/1. Functionally, transfers an acetyl group from acetyl-CoA to L-homoserine, forming acetyl-L-homoserine. This is Homoserine O-acetyltransferase from Gluconobacter oxydans (strain 621H) (Gluconobacter suboxydans).